Consider the following 349-residue polypeptide: Phosphoribosylformylglycinamidine cyclo-ligase (349 aa).

The protein belongs to the AIR synthase family.

The protein localises to the cytoplasm. The catalysed reaction is 2-formamido-N(1)-(5-O-phospho-beta-D-ribosyl)acetamidine + ATP = 5-amino-1-(5-phospho-beta-D-ribosyl)imidazole + ADP + phosphate + H(+). Its pathway is purine metabolism; IMP biosynthesis via de novo pathway; 5-amino-1-(5-phospho-D-ribosyl)imidazole from N(2)-formyl-N(1)-(5-phospho-D-ribosyl)glycinamide: step 2/2. The sequence is that of Phosphoribosylformylglycinamidine cyclo-ligase from Methanococcus vannielii (strain ATCC 35089 / DSM 1224 / JCM 13029 / OCM 148 / SB).